The sequence spans 465 residues: GTPase Der (465 aa).

EngA-type G domains are found at residues Phe-3–Tyr-166 and Ile-184–Asn-358. GTP contacts are provided by residues Gly-9–Ser-16, Asp-56–Ile-60, Asn-118–Asp-121, Gly-190–Ser-197, Asp-237–Val-241, and Asn-302–Asp-305. The 85-residue stretch at Lys-359–Glu-443 folds into the KH-like domain. The segment at Phe-446–Lys-465 is disordered.

Belongs to the TRAFAC class TrmE-Era-EngA-EngB-Septin-like GTPase superfamily. EngA (Der) GTPase family. As to quaternary structure, associates with the 50S ribosomal subunit.

In terms of biological role, GTPase that plays an essential role in the late steps of ribosome biogenesis. The polypeptide is GTPase Der (Francisella tularensis subsp. tularensis (strain WY96-3418)).